A 378-amino-acid polypeptide reads, in one-letter code: Cytochrome b (378 aa).

4 helical membrane passes run Phe-34–Met-54, Trp-78–Val-99, Trp-114–Leu-134, and Phe-179–Leu-199. The heme b site is built by His-84 and His-98. Residues His-183 and His-197 each contribute to the heme b site. His-202 provides a ligand contact to a ubiquinone. 4 consecutive transmembrane segments (helical) span residues Tyr-227–Phe-247, Leu-289–His-309, Leu-321–Ala-341, and Tyr-348–Leu-368.

It belongs to the cytochrome b family. As to quaternary structure, the main subunits of complex b-c1 are: cytochrome b, cytochrome c1 and the Rieske protein. Heme b serves as cofactor.

Its subcellular location is the mitochondrion inner membrane. Component of the ubiquinol-cytochrome c reductase complex (complex III or cytochrome b-c1 complex) that is part of the mitochondrial respiratory chain. The b-c1 complex mediates electron transfer from ubiquinol to cytochrome c. Contributes to the generation of a proton gradient across the mitochondrial membrane that is then used for ATP synthesis. This chain is Cytochrome b (mt:Cyt-b), found in Anopheles gambiae (African malaria mosquito).